The sequence spans 198 residues: Putative pseudouridine methyltransferase (198 aa).

Positions 132 and 186 each coordinate S-adenosyl-L-methionine.

This sequence belongs to the methyltransferase superfamily. TrmY family.

It is found in the cytoplasm. In Vibrio vulnificus (strain CMCP6), this protein is Putative pseudouridine methyltransferase.